A 79-amino-acid polypeptide reads, in one-letter code: Large ribosomal subunit protein uL24 (79 aa).

It belongs to the universal ribosomal protein uL24 family. In terms of assembly, part of the 50S ribosomal subunit.

In terms of biological role, one of two assembly initiator proteins, it binds directly to the 5'-end of the 23S rRNA, where it nucleates assembly of the 50S subunit. One of the proteins that surrounds the polypeptide exit tunnel on the outside of the subunit. The protein is Large ribosomal subunit protein uL24 of Lactobacillus delbrueckii subsp. bulgaricus (strain ATCC BAA-365 / Lb-18).